A 508-amino-acid polypeptide reads, in one-letter code: Glycogen synthase (508 aa).

Residue lysine 15 participates in ADP-alpha-D-glucose binding. A disordered region spans residues 483 to 508 (ARNRAETRPQTASALSYREPRPAAEY).

The protein belongs to the glycosyltransferase 1 family. Bacterial/plant glycogen synthase subfamily.

It catalyses the reaction [(1-&gt;4)-alpha-D-glucosyl](n) + ADP-alpha-D-glucose = [(1-&gt;4)-alpha-D-glucosyl](n+1) + ADP + H(+). It functions in the pathway glycan biosynthesis; glycogen biosynthesis. Functionally, synthesizes alpha-1,4-glucan chains using ADP-glucose. This Paracidovorax citrulli (strain AAC00-1) (Acidovorax citrulli) protein is Glycogen synthase.